Reading from the N-terminus, the 740-residue chain is NAD(P)H-quinone oxidoreductase subunit 5, chloroplastic (740 aa).

The next 16 membrane-spanning stretches (helical) occupy residues W9–F29, W40–I60, I89–I109, F125–I145, I147–T167, G185–F205, N219–A239, T258–A278, V286–A306, L327–I347, A354–S374, I396–S416, W425–Y445, L543–F563, V602–I622, and S717–F737.

Belongs to the complex I subunit 5 family. In terms of assembly, NDH is composed of at least 16 different subunits, 5 of which are encoded in the nucleus.

The protein localises to the plastid. The protein resides in the chloroplast thylakoid membrane. The catalysed reaction is a plastoquinone + NADH + (n+1) H(+)(in) = a plastoquinol + NAD(+) + n H(+)(out). It catalyses the reaction a plastoquinone + NADPH + (n+1) H(+)(in) = a plastoquinol + NADP(+) + n H(+)(out). Its function is as follows. NDH shuttles electrons from NAD(P)H:plastoquinone, via FMN and iron-sulfur (Fe-S) centers, to quinones in the photosynthetic chain and possibly in a chloroplast respiratory chain. The immediate electron acceptor for the enzyme in this species is believed to be plastoquinone. Couples the redox reaction to proton translocation, and thus conserves the redox energy in a proton gradient. This is NAD(P)H-quinone oxidoreductase subunit 5, chloroplastic (ndhF) from Nicotiana tomentosiformis (Tobacco).